The following is a 196-amino-acid chain: Mitochondrial intermembrane space cysteine motif-containing protein MIX23 (196 aa).

The short motif at 99 to 114 is the Cx14C motif element; it reads CEKEAAEMKNETDQQC. The Cx13C motif motif lies at 178–192; the sequence is CEQNNDYLKEFTQFC.

Belongs to the MIX23 family.

It localises to the mitochondrion intermembrane space. Regulator of the mitochondrial protein import machinery that is localized in the mitochondrial intermembrane space (IMS) and facilitates the transport of proteins from the cytosol into the mitochondrial matrix. Not essential for mitochondrial protein import but induced and required when mitochondrial import is compromised. Stimulates or stabilizes the translocation into the mitochondria of proteins such as OXA1, ATP1 and COX12. This is Mitochondrial intermembrane space cysteine motif-containing protein MIX23 from Saccharomyces cerevisiae (strain ATCC 204508 / S288c) (Baker's yeast).